A 281-amino-acid chain; its full sequence is MARRVSTTRLLLLLLLVAAAAAAAAGDQEDPRGGGDNGTARLDRRTKMFLHAARASDGGATGMEKAGLGLFDAFFASLSMILVSEIGDETFIIAALMAMRHPKSTVLSGALSALVVMTILSTGLGRIVPNLISRKHTNSAATVLYAFFGLRLLYIAWRSDSKASQKKEIEEVEEKLEAGQGKSTFRRIFSRFCTPIFLESFVLTFLAEWGDRSQIATIALATHKNAVGVAVGATLGHTICTSFAVVGGSMLASKISQGTVATIGGLLFLGFSLSSYFYPPL.

An N-terminal signal peptide occupies residues 1–22 (MARRVSTTRLLLLLLLVAAAAA). The next 6 helical transmembrane spans lie at 66 to 86 (AGLG…VSEI), 105 to 125 (TVLS…TGLG), 137 to 157 (TNSA…YIAW), 188 to 208 (IFSR…FLAE), 226 to 246 (AVGV…FAVV), and 258 to 278 (GTVA…SYFY).

The protein belongs to the GDT1 family.

It localises to the membrane. This is GDT1-like protein 4 from Oryza sativa subsp. indica (Rice).